The following is a 488-amino-acid chain: UDP-N-acetylmuramoyl-L-alanyl-D-glutamate--2,6-diaminopimelate ligase (488 aa).

Residues L24, S26, and 41–43 (HQV) each bind UDP-N-acetyl-alpha-D-muramoyl-L-alanyl-D-glutamate. ATP is bound at residue 113–119 (GTNGKTT). UDP-N-acetyl-alpha-D-muramoyl-L-alanyl-D-glutamate contacts are provided by residues N154, 155–156 (TT), S182, Q188, and R190. K222 is modified (N6-carboxylysine). Meso-2,6-diaminopimelate is bound by residues R386, 410–413 (DNPR), G461, and E465. A Meso-diaminopimelate recognition motif motif is present at residues 410 to 413 (DNPR).

It belongs to the MurCDEF family. MurE subfamily. Requires Mg(2+) as cofactor. Post-translationally, carboxylation is probably crucial for Mg(2+) binding and, consequently, for the gamma-phosphate positioning of ATP.

The protein localises to the cytoplasm. The catalysed reaction is UDP-N-acetyl-alpha-D-muramoyl-L-alanyl-D-glutamate + meso-2,6-diaminopimelate + ATP = UDP-N-acetyl-alpha-D-muramoyl-L-alanyl-gamma-D-glutamyl-meso-2,6-diaminopimelate + ADP + phosphate + H(+). The protein operates within cell wall biogenesis; peptidoglycan biosynthesis. In terms of biological role, catalyzes the addition of meso-diaminopimelic acid to the nucleotide precursor UDP-N-acetylmuramoyl-L-alanyl-D-glutamate (UMAG) in the biosynthesis of bacterial cell-wall peptidoglycan. The protein is UDP-N-acetylmuramoyl-L-alanyl-D-glutamate--2,6-diaminopimelate ligase of Haemophilus influenzae (strain PittGG).